The sequence spans 802 residues: Copper-exporting P-type ATPase (802 aa).

2 consecutive HMA domains span residues 5 to 71 (KEIA…YHVV) and 73 to 139 (EKAE…YKLK). Cu(+)-binding residues include Cys-16, Cys-19, Cys-84, and Cys-87. Transmembrane regions (helical) follow at residues 162-181 (LIFS…SHFT), 196-218 (WMQF…VGAY), 230-249 (VLVA…LTFQ), 259-278 (GLYY…GKLF), 412-434 (ISGI…WYLW), and 447-469 (FIAV…SIMA). Catalysis depends on Asp-499, which acts as the 4-aspartylphosphate intermediate. Mg(2+) is bound by residues Asp-698 and Asp-702. Transmembrane regions (helical) follow at residues 756 to 775 (LFWA…LGFL) and 779 to 796 (IAGA…LNAL).

The protein belongs to the cation transport ATPase (P-type) (TC 3.A.3) family. Type IB subfamily. As to quaternary structure, monomer at sub-stoichiometric copper concentrations. Homodimer at higher copper concentrations. Forms a heterodimer (electrostatic interactions) with CopZ during the transfer of Cu(+).

Its subcellular location is the cell membrane. It catalyses the reaction Cu(+)(in) + ATP + H2O = Cu(+)(out) + ADP + phosphate + H(+). Functionally, involved in copper export. The chain is Copper-exporting P-type ATPase (copA) from Bacillus subtilis (strain 168).